A 337-amino-acid chain; its full sequence is o-succinylbenzoate synthase (337 aa).

The active-site Proton donor is the Lys-142. Residues Asp-170, Glu-199, and Asp-222 each contribute to the Mg(2+) site. Lys-248 serves as the catalytic Proton acceptor.

This sequence belongs to the mandelate racemase/muconate lactonizing enzyme family. MenC type 1 subfamily. A divalent metal cation is required as a cofactor.

It catalyses the reaction (1R,6R)-6-hydroxy-2-succinyl-cyclohexa-2,4-diene-1-carboxylate = 2-succinylbenzoate + H2O. The protein operates within quinol/quinone metabolism; 1,4-dihydroxy-2-naphthoate biosynthesis; 1,4-dihydroxy-2-naphthoate from chorismate: step 4/7. It participates in quinol/quinone metabolism; menaquinone biosynthesis. Converts 2-succinyl-6-hydroxy-2,4-cyclohexadiene-1-carboxylate (SHCHC) to 2-succinylbenzoate (OSB). This is o-succinylbenzoate synthase from Pasteurella multocida (strain Pm70).